We begin with the raw amino-acid sequence, 311 residues long: Aspartate carbamoyltransferase catalytic subunit (311 aa).

2 residues coordinate carbamoyl phosphate: R59 and T60. K87 is an L-aspartate binding site. Carbamoyl phosphate is bound by residues R109, H139, and Q142. L-aspartate contacts are provided by R172 and R224. Carbamoyl phosphate is bound by residues A265 and P266.

The protein belongs to the aspartate/ornithine carbamoyltransferase superfamily. ATCase family. Heterododecamer (2C3:3R2) of six catalytic PyrB chains organized as two trimers (C3), and six regulatory PyrI chains organized as three dimers (R2).

The enzyme catalyses carbamoyl phosphate + L-aspartate = N-carbamoyl-L-aspartate + phosphate + H(+). The protein operates within pyrimidine metabolism; UMP biosynthesis via de novo pathway; (S)-dihydroorotate from bicarbonate: step 2/3. Its function is as follows. Catalyzes the condensation of carbamoyl phosphate and aspartate to form carbamoyl aspartate and inorganic phosphate, the committed step in the de novo pyrimidine nucleotide biosynthesis pathway. The polypeptide is Aspartate carbamoyltransferase catalytic subunit (Streptococcus pyogenes serotype M4 (strain MGAS10750)).